The sequence spans 63 residues: Putative antitoxin AF_1084 (63 aa).

Belongs to the UPF0165 family.

Its function is as follows. Possibly the antitoxin component of a type II toxin-antitoxin (TA) system. In Archaeoglobus fulgidus (strain ATCC 49558 / DSM 4304 / JCM 9628 / NBRC 100126 / VC-16), this protein is Putative antitoxin AF_1084.